Consider the following 477-residue polypeptide: MKKVELVFIPSPGAGHHLPTLQFVKRLIDRNDRISITILAIQSYFPTTLSSYTKSIAASEPRIRFIDVPQPQDRPPQEMYKSRAQIFSLYIESHVPSVKKIITNLVSSSANSSDSIRVAALVVDLFCVSMIDVAKELNIPSYLFLTSNAGYLAFMLHLPILHEKNQIAVEESDPDWSIPGIVHPVPPRVLPAALTDGRLSAYIKLASRFRETRGIIVNTFVELETHAITLFSNDDRVPPVYPVGPVIDLDDGQEHSNLDQAQRDKIIKWLDDQPQKSVVFLCFGSMGSFGAEQVKEIAVGLEQSGQRFLWSLRMPSPKGIVPSDCSNLEEVLPDGFLERTNGKKGLICGWAPQVEILAHSATGGFLSHCGWNSILESLWHGVPIATWPMYAEQQLNAFRMVRELGMALEMRLDYKAGSADVVGADEIEKAVVGVMEKDSEVRKKVEEMGKMARKAVKDGGSSFASVGRFIEDVIGQN.

Residues serine 285, 350-351 (WA), 368-376 (HCGWNSILE), and 390-393 (YAEQ) each bind UDP-alpha-D-glucose.

It belongs to the UDP-glycosyltransferase family.

In terms of biological role, glycosyltransferase that possesses chalcone and flavonol 2'-O-glycosyltransferase activity. Converts phloretin to phlorizin (phloretin 2'-O-glucoside), a potent antioxidant. Possesses glycosyltransferase activity toward quercetin, isoliquiritigenin, butein and caffeic acid. This chain is UDP-glycosyltransferase 71K1, found in Malus domestica (Apple).